Reading from the N-terminus, the 1077-residue chain is Eukaryotic translation initiation factor 2-alpha kinase pek-1 (1077 aa).

Residues 1-23 (MSVYYIVLAGFLLFMALVPFNAG) form the signal peptide. Residues 24–453 (QQYIDDDIEV…ITLMQTIFSY (430 aa)) are Lumenal-facing. A glycan (N-linked (GlcNAc...) asparagine) is linked at N206. The chain crosses the membrane as a helical span at residues 454–474 (IFNPTAVVSFLAGLIGVTVAV). Over 475-1077 (VYNKIAKSSP…HEVATHKFLQ (603 aa)) the chain is Cytoplasmic. In terms of domain architecture, Protein kinase spans 604–1076 (FEVKKVIGHG…AHEVATHKFL (473 aa)). Residues 610 to 618 (IGHGGFGVV) and K633 contribute to the ATP site. Residues 727-834 (MPPVVGNTTD…FVDGSDDVDN (108 aa)) form a disordered region. Positions 732 to 746 (GNTTDAENSWSTSAK) are enriched in polar residues. A compositionally biased stretch (basic and acidic residues) spans 766-778 (GSDRTTAELKEES). Positions 783-796 (ESDEESDTTEDSSS) are enriched in acidic residues. Low complexity predominate over residues 797-808 (SDESPSSSSGSS). The active-site Proton acceptor is D933.

This sequence belongs to the protein kinase superfamily. Ser/Thr protein kinase family. GCN2 subfamily. As to quaternary structure, forms dimers with HSPA5/BIP in resting cells. Oligomerizes in ER-stressed cells. Autophosphorylated. In terms of processing, N-glycosylated. Expressed in intestinal cells.

The protein localises to the endoplasmic reticulum membrane. The enzyme catalyses L-seryl-[protein] + ATP = O-phospho-L-seryl-[protein] + ADP + H(+). It catalyses the reaction L-threonyl-[protein] + ATP = O-phospho-L-threonyl-[protein] + ADP + H(+). Its activity is regulated as follows. Perturbation in protein folding in the endoplasmic reticulum (ER) promotes reversible dissociation from HSPA5/BIP and oligomerization, resulting in transautophosphorylation and kinase activity induction. Its function is as follows. Phosphorylates the alpha subunit of eukaryotic translation-initiation factor 2 (eIF2alpha), leading to its inactivation and thus to a rapid reduction of translational initiation and repression of global protein synthesis. May phosphorylate eIF2alpha during hypoxia. Proposed to have a role in alleviating endoplasmic reticulum stress. The chain is Eukaryotic translation initiation factor 2-alpha kinase pek-1 (pek-1) from Caenorhabditis elegans.